Reading from the N-terminus, the 241-residue chain is Ubiquinone biosynthesis O-methyltransferase (241 aa).

4 residues coordinate S-adenosyl-L-methionine: Arg-42, Gly-62, Asp-83, and Met-127.

The protein belongs to the methyltransferase superfamily. UbiG/COQ3 family.

The enzyme catalyses a 3-demethylubiquinol + S-adenosyl-L-methionine = a ubiquinol + S-adenosyl-L-homocysteine + H(+). It carries out the reaction a 3-(all-trans-polyprenyl)benzene-1,2-diol + S-adenosyl-L-methionine = a 2-methoxy-6-(all-trans-polyprenyl)phenol + S-adenosyl-L-homocysteine + H(+). The protein operates within cofactor biosynthesis; ubiquinone biosynthesis. Functionally, O-methyltransferase that catalyzes the 2 O-methylation steps in the ubiquinone biosynthetic pathway. In Pectobacterium atrosepticum (strain SCRI 1043 / ATCC BAA-672) (Erwinia carotovora subsp. atroseptica), this protein is Ubiquinone biosynthesis O-methyltransferase.